Consider the following 267-residue polypeptide: MEMO1 family protein MA_0601 (267 aa).

The protein belongs to the MEMO1 family.

The polypeptide is MEMO1 family protein MA_0601 (Methanosarcina acetivorans (strain ATCC 35395 / DSM 2834 / JCM 12185 / C2A)).